Reading from the N-terminus, the 489-residue chain is N-succinylglutamate 5-semialdehyde dehydrogenase (489 aa).

216–221 (GSAATG) is an NAD(+) binding site. Catalysis depends on residues E239 and C273.

This sequence belongs to the aldehyde dehydrogenase family. AstD subfamily.

The catalysed reaction is N-succinyl-L-glutamate 5-semialdehyde + NAD(+) + H2O = N-succinyl-L-glutamate + NADH + 2 H(+). It functions in the pathway amino-acid degradation; L-arginine degradation via AST pathway; L-glutamate and succinate from L-arginine: step 4/5. Its function is as follows. Catalyzes the NAD-dependent reduction of succinylglutamate semialdehyde into succinylglutamate. The chain is N-succinylglutamate 5-semialdehyde dehydrogenase from Erwinia tasmaniensis (strain DSM 17950 / CFBP 7177 / CIP 109463 / NCPPB 4357 / Et1/99).